The following is a 733-amino-acid chain: Exosome complex exonuclease RRP6 (733 aa).

Ser-138 is modified (phosphoserine). The 3'-5' exonuclease domain occupies 214–380 (IWVDTSTELE…NIYDQLRNKL (167 aa)). Asp-238 and Glu-240 together coordinate Mn(2+). The Zn(2+) site is built by Asp-238 and Glu-240. AMP is bound by residues Glu-240 and His-241. 2 residues coordinate UMP: Glu-240 and His-241. Asp-296 is a binding site for Mn(2+). The AMP site is built by Trp-299, Lys-342, and Gln-345. Trp-299, Lys-342, and Gln-345 together coordinate UMP. Residue Asp-365 coordinates Mn(2+). Asp-365 serves as a coordination point for Zn(2+). Residues 435–515 (PPEREVLVRE…RDALRNIKNT (81 aa)) form the HRDC domain. Thr-520 bears the Phosphothreonine mark. Ser-640 and Ser-645 each carry phosphoserine. Positions 662-733 (IQKKQPAKEK…AKGKNLSFKR (72 aa)) are disordered. Residues 667-680 (PAKEKGVTEKDAVD) show a composition bias toward basic and acidic residues. Over residues 687 to 697 (ILSNKPGQNNR) the composition is skewed to polar residues. 2 consecutive short sequence motifs (nuclear localization signal) follow at residues 700–704 (KKRRF) and 718–721 (KKRR). Residues 716–733 (AAKKRRPAAKGKNLSFKR) are compositionally biased toward basic residues.

This sequence belongs to the exosome component 10/RRP6 family. Component of the RNA exosome complex. Specifically part of the catalytically inactive RNA exosome core complex (Exo-9) which may associate with the catalytic subunits RRP6 and DIS3 in cytoplasmic- and nuclear-specific RNA exosome complex forms. Exo-9 is formed by a hexameric base ring of RNase PH domain-containing subunits and a cap ring consisting of CSL4, RRP4 and RRP40. RRP6 specifically is part of the nuclear form of the RNA exosome complex; the association appears to be mediated by Exo-9 and not by DIS3. Interacts with LRP1. Interacts with NPL3, NOP53 and PAP1.

The protein localises to the nucleus. It is found in the nucleolus. Its function is as follows. Nuclear-specific catalytic component of the RNA exosome complex which has 3'-&gt;5' exoribonuclease activity and participates in a multitude of cellular RNA processing and degradation events. In the nucleus, the RNA exosome complex is involved in proper maturation of stable RNA species such as rRNA, snRNA and snoRNA, in the elimination of RNA processing by-products and non-coding 'pervasive' transcripts, such as antisense RNA species and cryptic unstable transcripts (CUTs), and of mRNAs with processing defects, thereby limiting or excluding their export to the cytoplasm. The catalytic inactive RNA exosome core complex of 9 subunits (Exo-9) is proposed to play a pivotal role in the binding and presentation of RNA for ribonucleolysis, and to serve as a scaffold for the association with catalytic subunits and accessory proteins or complexes. RRP6 has 3'-5' exonuclease activity which is not modulated upon association with Exo-9 suggesting that the complex inner RNA-binding path is not used to access its active site. This chain is Exosome complex exonuclease RRP6 (RRP6), found in Saccharomyces cerevisiae (strain ATCC 204508 / S288c) (Baker's yeast).